The sequence spans 178 residues: uncharacterized protein (178 aa).

Positions 1–19 (MKKNIHILGASGVGTSTLG) are cleaved as a signal peptide.

This is an uncharacterized protein from Bacillus subtilis (strain 168).